Consider the following 753-residue polypeptide: Polyribonucleotide nucleotidyltransferase (753 aa).

Mg(2+) contacts are provided by aspartate 523 and aspartate 529. The KH domain maps to 589–648; it reads PRIISVRIPVDKIGAVIGPKGAMINQIQDDTGADITIEDDGTVLIGATDGASAEAARSAV. The S1 motif domain occupies 660–732; that stretch reads GERYLGTVVK…DRGKLSLSPV (73 aa). A disordered region spans residues 733-753; that stretch reads GAESDAVAETADAIESSQTEA.

It belongs to the polyribonucleotide nucleotidyltransferase family. It depends on Mg(2+) as a cofactor.

It is found in the cytoplasm. It catalyses the reaction RNA(n+1) + phosphate = RNA(n) + a ribonucleoside 5'-diphosphate. Its function is as follows. Involved in mRNA degradation. Catalyzes the phosphorolysis of single-stranded polyribonucleotides processively in the 3'- to 5'-direction. The sequence is that of Polyribonucleotide nucleotidyltransferase from Micrococcus luteus (strain ATCC 4698 / DSM 20030 / JCM 1464 / CCM 169 / CCUG 5858 / IAM 1056 / NBRC 3333 / NCIMB 9278 / NCTC 2665 / VKM Ac-2230) (Micrococcus lysodeikticus).